Consider the following 211-residue polypeptide: Uridine kinase (211 aa).

Residue 15 to 22 coordinates ATP; that stretch reads GGSGSGKT.

Belongs to the uridine kinase family.

Its subcellular location is the cytoplasm. The enzyme catalyses uridine + ATP = UMP + ADP + H(+). It carries out the reaction cytidine + ATP = CMP + ADP + H(+). It participates in pyrimidine metabolism; CTP biosynthesis via salvage pathway; CTP from cytidine: step 1/3. It functions in the pathway pyrimidine metabolism; UMP biosynthesis via salvage pathway; UMP from uridine: step 1/1. This chain is Uridine kinase, found in Lactobacillus helveticus (strain DPC 4571).